Reading from the N-terminus, the 321-residue chain is Mas-related G-protein coupled receptor member H (321 aa).

Residues 1 to 35 (MEPLATTLCPQECTQTTRNETPNETTWSSEHVTKY) are Extracellular-facing. The N-linked (GlcNAc...) asparagine glycan is linked to Asn23. Residues 36-56 (TYISISLVICSLGLVGNGLLI) form a helical membrane-spanning segment. The Cytoplasmic segment spans residues 57 to 71 (WFLIFCIKRKPFTIY). Residues 72 to 92 (ILHLAFADFMVLLCSSIIQLV) form a helical membrane-spanning segment. Residues 93–102 (NTFHIYDSTL) are Extracellular-facing. A helical membrane pass occupies residues 103–126 (VSYAVLFMIFGYNTGLHLLTAISV). The Cytoplasmic segment spans residues 127-147 (ERCLSVLYPIWYHCRRPKHQS). The helical transmembrane segment at 148–168 (TVACTLLWALSVLVSGLENFF) threads the bilayer. The Extracellular portion of the chain corresponds to 169-188 (CILEVKPQFPECRYVYIFSC). The helical transmembrane segment at 189–209 (TLTFLVFVPLMVFSNLILFIQ) threads the bilayer. At 210-225 (VCCNLKPRQPAKLYVI) the chain is on the cytoplasmic side. The helical transmembrane segment at 226–246 (IMATVILFLVFAMPMKVLLII) threads the bilayer. A topological domain (extracellular) is located at residue Gly247. Residues 248 to 271 (YYSNSTDASVWKSLPYLNMLSTIN) form a helical membrane-spanning segment. Over 272–320 (CSINPIVYFVVGSLRRKRSRKSLKEALQKVFEEKPVVASRENEVQFSLP) the chain is Cytoplasmic.

The protein belongs to the G-protein coupled receptor 1 family. Mas subfamily.

The protein resides in the cell membrane. In terms of biological role, orphan receptor. May regulate nociceptor function and/or development, including the sensation or modulation of pain. This chain is Mas-related G-protein coupled receptor member H (Mrgprh), found in Rattus norvegicus (Rat).